A 613-amino-acid polypeptide reads, in one-letter code: Na(+)/H(+) antiporter NhaA 1 (613 aa).

Positions Met1–Pro23 are disordered. The interval Met1–Val408 is na(+)/H(+) antiporter NhaA. The next 11 helical transmembrane spans lie at Ala29 to Trp49, Gly81 to Gly101, Ala110 to Phe130, Gln138 to Ile158, Ile168 to Phe188, Asp191 to Val211, Ile231 to Ile251, Ala300 to Val320, Trp337 to Leu357, Gly377 to Ile397, and Val408 to Thr428. Positions Gly409–Arg613 constitute a Thioredoxin domain.

The protein in the N-terminal section; belongs to the NhaA Na(+)/H(+) (TC 2.A.33) antiporter family.

It localises to the cell membrane. It carries out the reaction Na(+)(in) + 2 H(+)(out) = Na(+)(out) + 2 H(+)(in). Na(+)/H(+) antiporter that extrudes sodium in exchange for external protons. The polypeptide is Na(+)/H(+) antiporter NhaA 1 (Mycobacterium sp. (strain KMS)).